The sequence spans 485 residues: Aspartyl/glutamyl-tRNA(Asn/Gln) amidotransferase subunit B (485 aa).

Belongs to the GatB/GatE family. GatB subfamily. In terms of assembly, heterotrimer of A, B and C subunits.

The enzyme catalyses L-glutamyl-tRNA(Gln) + L-glutamine + ATP + H2O = L-glutaminyl-tRNA(Gln) + L-glutamate + ADP + phosphate + H(+). The catalysed reaction is L-aspartyl-tRNA(Asn) + L-glutamine + ATP + H2O = L-asparaginyl-tRNA(Asn) + L-glutamate + ADP + phosphate + 2 H(+). Allows the formation of correctly charged Asn-tRNA(Asn) or Gln-tRNA(Gln) through the transamidation of misacylated Asp-tRNA(Asn) or Glu-tRNA(Gln) in organisms which lack either or both of asparaginyl-tRNA or glutaminyl-tRNA synthetases. The reaction takes place in the presence of glutamine and ATP through an activated phospho-Asp-tRNA(Asn) or phospho-Glu-tRNA(Gln). The chain is Aspartyl/glutamyl-tRNA(Asn/Gln) amidotransferase subunit B from Borreliella afzelii (strain PKo) (Borrelia afzelii).